The primary structure comprises 102 residues: MYAIIKHSGKQYKVSVGDELKLDHFEAESKASIEVSEVLAINDKELKVGAPFVAGAKVVLEVINHGKDKKVVIYKKRRRKDSKLKRGFRRQFTRVVVKDIKA.

It belongs to the bacterial ribosomal protein bL21 family. Part of the 50S ribosomal subunit. Contacts protein L20.

This protein binds to 23S rRNA in the presence of protein L20. The polypeptide is Large ribosomal subunit protein bL21 (Campylobacter jejuni subsp. jejuni serotype O:6 (strain 81116 / NCTC 11828)).